The sequence spans 274 residues: Large ribosomal subunit protein uL2cz/uL2cy (274 aa).

Disordered regions lie at residues 1–23 (MAIH…SQVK) and 223–274 (MNPV…RRSK).

The protein belongs to the universal ribosomal protein uL2 family. In terms of assembly, part of the 50S ribosomal subunit.

The protein localises to the plastid. Its subcellular location is the chloroplast. In Ranunculus macranthus (Large buttercup), this protein is Large ribosomal subunit protein uL2cz/uL2cy (rpl2-A).